The sequence spans 468 residues: Glutamate--tRNA ligase (468 aa).

Residues 12–22 carry the 'HIGH' region motif; it reads PSPTGFIHLGN. Positions 244 to 248 match the 'KMSKS' region motif; it reads KMSKR. ATP is bound at residue Lys247.

Belongs to the class-I aminoacyl-tRNA synthetase family. Glutamate--tRNA ligase type 1 subfamily. As to quaternary structure, monomer.

The protein localises to the cytoplasm. It catalyses the reaction tRNA(Glu) + L-glutamate + ATP = L-glutamyl-tRNA(Glu) + AMP + diphosphate. In terms of biological role, catalyzes the attachment of glutamate to tRNA(Glu) in a two-step reaction: glutamate is first activated by ATP to form Glu-AMP and then transferred to the acceptor end of tRNA(Glu). The protein is Glutamate--tRNA ligase of Polynucleobacter necessarius subsp. necessarius (strain STIR1).